A 599-amino-acid chain; its full sequence is Elongation factor 4 (599 aa).

The tr-type G domain occupies 4–186 (DNIRNFSIIA…EIVNKIPPPR (183 aa)). Residues 16–21 (DHGKST) and 133–136 (NKID) each bind GTP.

It belongs to the TRAFAC class translation factor GTPase superfamily. Classic translation factor GTPase family. LepA subfamily.

The protein localises to the cell inner membrane. It carries out the reaction GTP + H2O = GDP + phosphate + H(+). Its function is as follows. Required for accurate and efficient protein synthesis under certain stress conditions. May act as a fidelity factor of the translation reaction, by catalyzing a one-codon backward translocation of tRNAs on improperly translocated ribosomes. Back-translocation proceeds from a post-translocation (POST) complex to a pre-translocation (PRE) complex, thus giving elongation factor G a second chance to translocate the tRNAs correctly. Binds to ribosomes in a GTP-dependent manner. The chain is Elongation factor 4 from Geotalea daltonii (strain DSM 22248 / JCM 15807 / FRC-32) (Geobacter daltonii).